The sequence spans 245 residues: Probable phosphatase Ent638_1550 (245 aa).

Zn(2+) is bound by residues histidine 7, histidine 9, histidine 15, histidine 40, glutamate 73, histidine 101, histidine 131, aspartate 192, and histidine 194.

Belongs to the PHP family. As to quaternary structure, homotrimer. Requires Zn(2+) as cofactor.

In Enterobacter sp. (strain 638), this protein is Probable phosphatase Ent638_1550.